The following is a 439-amino-acid chain: Branched-chain amino acid permease BrnQ (439 aa).

Residues 1–9 (MTHQLKSRD) lie on the Cytoplasmic side of the membrane. Residues 10–30 (IIALGFMTFALFVGAGNIIFP) traverse the membrane as a helical segment. Residues 31–43 (PMVGLQAGEHVWT) lie on the Periplasmic side of the membrane. Residues 44–64 (AAIGFLITAVGLPVLTVVALA) form a helical membrane-spanning segment. Over 65 to 79 (KVGGGVDSLSTPIGK) the chain is Cytoplasmic. A helical transmembrane segment spans residues 80 to 100 (VAGLLLATVCYLAVGPLFATP). At 101 to 118 (RTATVSFEVGIAPLTGDS) the chain is on the periplasmic side. The chain crosses the membrane as a helical span at residues 119–139 (AMPLLIYSVVYFAIVILVSLY). Residues 140–149 (PGKLLDTVGN) lie on the Cytoplasmic side of the membrane. Residues 150 to 170 (FLAPLKIIALVILSVAAIVWP) traverse the membrane as a helical segment. At 171-189 (AGPISNALDAYQNAAFSNG) the chain is on the periplasmic side. The helical transmembrane segment at 190–210 (FVNGYLTMDTLGAMVFGIVIV) threads the bilayer. Over 211–226 (NAARSRGVTEARLLTR) the chain is Cytoplasmic. Residues 227–247 (YTVWAGLMAGVGLTLLYLALF) form a helical membrane-spanning segment. Topologically, residues 248–277 (RLGSDSATLVDQSANGAAILHAYVQHTFGG) are periplasmic. A helical transmembrane segment spans residues 278-298 (AGSFLLAALIFIACLVTAVGL). Topologically, residues 299–316 (TCACAEFFAQYIPLSYRT) are cytoplasmic. Residues 317-337 (LVFILGGFSMVVSNLGLSHLI) traverse the membrane as a helical segment. Position 338 (Gln338) is a topological domain, periplasmic. The helical transmembrane segment at 339–359 (ISIPVLTAIYPPCIALVVLSF) threads the bilayer. Residues 360 to 369 (TRSWWHNSTR) lie on the Cytoplasmic side of the membrane. Residues 370–390 (IIAPAMFISLLFGILDGIKAS) form a helical membrane-spanning segment. The Periplasmic portion of the chain corresponds to 391-404 (AFGDMLPAWSQRLP). Residues 405-425 (LAEQGLAWLMPTVVMVILAII) form a helical membrane-spanning segment. Residues 426-439 (WDRAAGRQVTSSAH) are Cytoplasmic-facing.

The protein belongs to the branched chain amino acid transporter family.

It localises to the cell inner membrane. Liv-II branched chain amino acid transport system, which transports leucine, valine and isoleucine. This chain is Branched-chain amino acid permease BrnQ, found in Salmonella typhimurium (strain LT2 / SGSC1412 / ATCC 700720).